A 105-amino-acid chain; its full sequence is NADH-quinone oxidoreductase subunit K (105 aa).

3 helical membrane passes run 8–28 (LAAY…GVFL), 34–54 (IILL…LVAF), and 65–85 (VFVF…LAIL).

It belongs to the complex I subunit 4L family. As to quaternary structure, NDH-1 is composed of 14 different subunits. Subunits NuoA, H, J, K, L, M, N constitute the membrane sector of the complex.

Its subcellular location is the cell inner membrane. The enzyme catalyses a quinone + NADH + 5 H(+)(in) = a quinol + NAD(+) + 4 H(+)(out). In terms of biological role, NDH-1 shuttles electrons from NADH, via FMN and iron-sulfur (Fe-S) centers, to quinones in the respiratory chain. The immediate electron acceptor for the enzyme in this species is believed to be ubiquinone. Couples the redox reaction to proton translocation (for every two electrons transferred, four hydrogen ions are translocated across the cytoplasmic membrane), and thus conserves the redox energy in a proton gradient. The sequence is that of NADH-quinone oxidoreductase subunit K from Acidithiobacillus ferrooxidans (strain ATCC 23270 / DSM 14882 / CIP 104768 / NCIMB 8455) (Ferrobacillus ferrooxidans (strain ATCC 23270)).